Consider the following 209-residue polypeptide: Scoloptoxin SSD346 (209 aa).

The signal sequence occupies residues 1-22; it reads NILLSSTLFVLLMFQIIGSGLG.

Post-translationally, contains 2 disulfide bonds. As to expression, expressed by the venom gland.

The protein localises to the secreted. Functionally, may act as a voltage-gated calcium channel inhibitor. This is Scoloptoxin SSD346 from Scolopendra dehaani (Thai centipede).